Consider the following 209-residue polypeptide: Holliday junction branch migration complex subunit RuvA (209 aa).

The segment at 1-64 is domain I; sequence MIGKLKGLVD…EDSIKLYGFA (64 aa). Positions 65 to 143 are domain II; the sequence is SETEREWFRL…ALGASLHTLA (79 aa). Residues 144–154 are flexible linker; the sequence is GAGSEGAGVEA. The tract at residues 155–209 is domain III; that stretch reads PASGAVSDAISVLVNLGFGRSQAAVAVAASSKALGSGAGAGDLAKRALQELAQSG.

This sequence belongs to the RuvA family. In terms of assembly, homotetramer. Forms an RuvA(8)-RuvB(12)-Holliday junction (HJ) complex. HJ DNA is sandwiched between 2 RuvA tetramers; dsDNA enters through RuvA and exits via RuvB. An RuvB hexamer assembles on each DNA strand where it exits the tetramer. Each RuvB hexamer is contacted by two RuvA subunits (via domain III) on 2 adjacent RuvB subunits; this complex drives branch migration. In the full resolvosome a probable DNA-RuvA(4)-RuvB(12)-RuvC(2) complex forms which resolves the HJ.

The protein localises to the cytoplasm. Its function is as follows. The RuvA-RuvB-RuvC complex processes Holliday junction (HJ) DNA during genetic recombination and DNA repair, while the RuvA-RuvB complex plays an important role in the rescue of blocked DNA replication forks via replication fork reversal (RFR). RuvA specifically binds to HJ cruciform DNA, conferring on it an open structure. The RuvB hexamer acts as an ATP-dependent pump, pulling dsDNA into and through the RuvAB complex. HJ branch migration allows RuvC to scan DNA until it finds its consensus sequence, where it cleaves and resolves the cruciform DNA. This chain is Holliday junction branch migration complex subunit RuvA, found in Methylocella silvestris (strain DSM 15510 / CIP 108128 / LMG 27833 / NCIMB 13906 / BL2).